A 427-amino-acid polypeptide reads, in one-letter code: 3-phosphoshikimate 1-carboxyvinyltransferase (427 aa).

The 3-phosphoshikimate site is built by Lys20, Ser21, and Arg25. Residue Lys20 coordinates phosphoenolpyruvate. The phosphoenolpyruvate site is built by Gly92 and Arg120. Residues Ser166, Gln168, Asp312, and Lys339 each coordinate 3-phosphoshikimate. Gln168 contributes to the phosphoenolpyruvate binding site. Catalysis depends on Asp312, which acts as the Proton acceptor. Phosphoenolpyruvate is bound by residues Arg343 and Arg385.

It belongs to the EPSP synthase family. In terms of assembly, monomer.

It localises to the cytoplasm. The catalysed reaction is 3-phosphoshikimate + phosphoenolpyruvate = 5-O-(1-carboxyvinyl)-3-phosphoshikimate + phosphate. Its pathway is metabolic intermediate biosynthesis; chorismate biosynthesis; chorismate from D-erythrose 4-phosphate and phosphoenolpyruvate: step 6/7. Functionally, catalyzes the transfer of the enolpyruvyl moiety of phosphoenolpyruvate (PEP) to the 5-hydroxyl of shikimate-3-phosphate (S3P) to produce enolpyruvyl shikimate-3-phosphate and inorganic phosphate. In Streptococcus pneumoniae (strain Hungary19A-6), this protein is 3-phosphoshikimate 1-carboxyvinyltransferase.